The chain runs to 54 residues: MKFTLALLTTLCASLASAGVVITPVRPNQVIPANSGDCFFGVVTPQGCAPLRKS.

Positions 1 to 18 are cleaved as a signal peptide; it reads MKFTLALLTTLCASLASA. Residues Cys38 and Cys48 are joined by a disulfide bond.

The protein belongs to the MC69 virulence factor family.

It is found in the secreted. In terms of biological role, secreted protein required for appressorial penetration of intact host epidermal cells and for pathogenicity. The chain is Secreted virulence factor MC69 from Colletotrichum orbiculare (strain 104-T / ATCC 96160 / CBS 514.97 / LARS 414 / MAFF 240422) (Cucumber anthracnose fungus).